The following is a 291-amino-acid chain: BTB/POZ domain-containing protein 19 (291 aa).

Residues 29–98 (SDVRFVVGQE…LYTNSAKLQR (70 aa)) enclose the BTB domain. The 101-residue stretch at 134 to 234 (CEALQVAVTF…LALLAPAELS (101 aa)) folds into the BACK domain.

The polypeptide is BTB/POZ domain-containing protein 19 (BTBD19) (Bos taurus (Bovine)).